The chain runs to 619 residues: UPF0329 protein ECU08_2070 (619 aa).

2 stretches are compositionally biased toward basic and acidic residues: residues 350-359 (EREKREESKG) and 369-385 (GAGE…RKEE). Residues 350 to 425 (EREKREESKG…REKKMGEEHH (76 aa)) form a disordered region. Over residues 386 to 396 (EGVEVEEEESA) the composition is skewed to acidic residues.

Belongs to the UPF0329 family.

In Encephalitozoon cuniculi (strain GB-M1) (Microsporidian parasite), this protein is UPF0329 protein ECU08_2070.